The chain runs to 231 residues: Putative N-acetylmannosamine-6-phosphate 2-epimerase (231 aa).

Belongs to the NanE family.

It carries out the reaction an N-acyl-D-glucosamine 6-phosphate = an N-acyl-D-mannosamine 6-phosphate. It functions in the pathway amino-sugar metabolism; N-acetylneuraminate degradation; D-fructose 6-phosphate from N-acetylneuraminate: step 3/5. Functionally, converts N-acetylmannosamine-6-phosphate (ManNAc-6-P) to N-acetylglucosamine-6-phosphate (GlcNAc-6-P). This Listeria innocua serovar 6a (strain ATCC BAA-680 / CLIP 11262) protein is Putative N-acetylmannosamine-6-phosphate 2-epimerase.